The sequence spans 74 residues: Conotoxin Im6.10 (74 aa).

The first 19 residues, 1–19 (MKTGMIICLLLIAFMDADG), serve as a signal peptide directing secretion. A propeptide spanning residues 20–47 (SPGDTLYSQKTADTDSGMKRFQKTFQKR) is cleaved from the precursor. Cystine bridges form between cysteine 49-cysteine 58, cysteine 52-cysteine 63, and cysteine 57-cysteine 73.

Expressed by the venom duct.

The protein localises to the secreted. Its function is as follows. Probable neurotoxin. The chain is Conotoxin Im6.10 from Conus imperialis (Imperial cone).